Consider the following 213-residue polypeptide: Chloramphenicol acetyltransferase 3 (213 aa).

The active-site Proton acceptor is His-189.

Belongs to the chloramphenicol acetyltransferase family. Homotrimer.

The catalysed reaction is chloramphenicol + acetyl-CoA = chloramphenicol 3-acetate + CoA. This enzyme is an effector of chloramphenicol resistance in bacteria. In Escherichia coli, this protein is Chloramphenicol acetyltransferase 3 (cat3).